Reading from the N-terminus, the 131-residue chain is Hypocretin neuropeptide precursor (131 aa).

The N-terminal stretch at 1–33 is a signal peptide; that stretch reads MNPPFAKVSWATVTLLLLLLLLPPAVLSPGAAA. Gln34 bears the Pyrrolidone carboxylic acid mark. Cystine bridges form between Cys39/Cys45 and Cys40/Cys47. Leucine amide is present on Leu66. At Met97 the chain carries Methionine amide. The propeptide at 98–131 is removed in mature form; the sequence is GRRAGAEPAPRLCPGRRCLAAAASSVAPGGRSGI.

The protein belongs to the orexin family. Post-translationally, specific enzymatic cleavages at paired basic residues yield the different active peptides.

It localises to the rough endoplasmic reticulum. It is found in the cytoplasmic vesicle. Its subcellular location is the synapse. Its function is as follows. Neuropeptides that play a significant role in the regulation of food intake and sleep-wakefulness, possibly by coordinating the complex behavioral and physiologic responses of these complementary homeostatic functions. A broader role in the homeostatic regulation of energy metabolism, autonomic function, hormonal balance and the regulation of body fluids, is also suggested. Functionally, binds to orexin receptors HCRTR1/OX1R and HCRTR2/OX2R with a high affinity. Stimulates food intake. Modulates pituitary luteinizing hormone secretion in an ovarian steroid-dependent manner. Binds to orexin receptor HCRTR2/OX2R only. Stimulates food intake. Modulates pituitary luteinizing hormone secretion in an ovarian steroid-dependent manner. The chain is Hypocretin neuropeptide precursor (HCRT) from Sus scrofa (Pig).